Here is a 100-residue protein sequence, read N- to C-terminus: MTFIRKPAGQAKPQKYSTDAYGRPAGKFRRNGPIRKKVCRFCADKVEIDYKNLSLLHTFVTEKGKILSGRMTGTCAKHQRELDTAIKRARMIALLPFTVN.

The interval 1–23 (MTFIRKPAGQAKPQKYSTDAYGR) is disordered.

Belongs to the bacterial ribosomal protein bS18 family. As to quaternary structure, part of the 30S ribosomal subunit. Forms a tight heterodimer with protein bS6.

Functionally, binds as a heterodimer with protein bS6 to the central domain of the 16S rRNA, where it helps stabilize the platform of the 30S subunit. The chain is Small ribosomal subunit protein bS18 from Endomicrobium trichonymphae.